Consider the following 121-residue polypeptide: Small ribosomal subunit protein uS13 (121 aa).

Residues 91-121 (HRRGLPVRGQNTKNNARTRKGPRKTVANKKK) form a disordered region. The segment covering 106–121 (ARTRKGPRKTVANKKK) has biased composition (basic residues).

Belongs to the universal ribosomal protein uS13 family. As to quaternary structure, part of the 30S ribosomal subunit. Forms a loose heterodimer with protein S19. Forms two bridges to the 50S subunit in the 70S ribosome.

Functionally, located at the top of the head of the 30S subunit, it contacts several helices of the 16S rRNA. In the 70S ribosome it contacts the 23S rRNA (bridge B1a) and protein L5 of the 50S subunit (bridge B1b), connecting the 2 subunits; these bridges are implicated in subunit movement. Contacts the tRNAs in the A and P-sites. The protein is Small ribosomal subunit protein uS13 of Lysinibacillus sphaericus (strain C3-41).